The primary structure comprises 334 residues: WD repeat-containing protein 54 (334 aa).

WD repeat units lie at residues 116–155 (SSVQ…PNIV), 162–206 (GHQT…TLLT), and 250–289 (AHAR…ESGS).

Homodimer and homotrimer; forms tight forms of dimers and trimers. Interacts with IZUMO1 and IZUMO1R/JUNO. Post-translationally, cross-linked to tightly form both dimers and trimers by TGM2. Cross-linking enhances the activation of EGF receptor-mediated signaling pathway. Cross-linking is inhibited by EGF. Ubiquitinated. EGF increases ubiquitination.

It localises to the vesicle. The protein resides in the cytoplasm. Its subcellular location is the cell membrane. Its function is as follows. Plays a role in the adhesion and fusion of the sperm-oocyte membrane through its interactions with IZUMO1 and IZUMO1R/JUNO. When cross-linked to form dimers and trimers, it has a regulatory effect on ERK signaling pathway activity in response to EGF stimulation. Colocalizes with the EGF receptor in WDR54-specific vesicle where it sustains the internalization and controls the degradation of the EGF receptor after EGF stimulation. The polypeptide is WD repeat-containing protein 54 (Mus musculus (Mouse)).